Here is a 422-residue protein sequence, read N- to C-terminus: Histidine--tRNA ligase (422 aa).

The protein belongs to the class-II aminoacyl-tRNA synthetase family. As to quaternary structure, homodimer.

Its subcellular location is the cytoplasm. The enzyme catalyses tRNA(His) + L-histidine + ATP = L-histidyl-tRNA(His) + AMP + diphosphate + H(+). This chain is Histidine--tRNA ligase, found in Mycolicibacterium vanbaalenii (strain DSM 7251 / JCM 13017 / BCRC 16820 / KCTC 9966 / NRRL B-24157 / PYR-1) (Mycobacterium vanbaalenii).